A 460-amino-acid polypeptide reads, in one-letter code: Acetyl-coenzyme A carboxylase carboxyl transferase subunit beta, chloroplastic (460 aa).

Residues 179-460 (LWVQCESCYG…GFFPLTQNGN (282 aa)) enclose the CoA carboxyltransferase N-terminal domain. Zn(2+) is bound by residues cysteine 183, cysteine 186, cysteine 202, and cysteine 205. The C4-type zinc finger occupies 183-205 (CESCYGLNYKKFFKSKMNICEHC).

Belongs to the AccD/PCCB family. As to quaternary structure, acetyl-CoA carboxylase is a heterohexamer composed of biotin carboxyl carrier protein, biotin carboxylase and 2 subunits each of ACCase subunit alpha and ACCase plastid-coded subunit beta (accD). Zn(2+) is required as a cofactor.

The protein resides in the plastid. It localises to the chloroplast stroma. It carries out the reaction N(6)-carboxybiotinyl-L-lysyl-[protein] + acetyl-CoA = N(6)-biotinyl-L-lysyl-[protein] + malonyl-CoA. It participates in lipid metabolism; malonyl-CoA biosynthesis; malonyl-CoA from acetyl-CoA: step 1/1. In terms of biological role, component of the acetyl coenzyme A carboxylase (ACC) complex. Biotin carboxylase (BC) catalyzes the carboxylation of biotin on its carrier protein (BCCP) and then the CO(2) group is transferred by the transcarboxylase to acetyl-CoA to form malonyl-CoA. This is Acetyl-coenzyme A carboxylase carboxyl transferase subunit beta, chloroplastic from Cicer arietinum (Chickpea).